Consider the following 421-residue polypeptide: MFSLHFIDEAFNEVYAGNGGHGIVAFRREKYVPFGGPAGGNGGNGGSVIFVGEQGETTLLKLKYQKHLKASHGFNGKNKSQNGANAPHLYVKVPLGTVFFTMDNHFLGEILHHQETLVIAKGGKGGRGNKALANFKNPAPSYAEKGDLGEHFKIKIQLKVLADVGLLGFPSVGKSSLISLISKAQPKIDSYPFTTLFPHLGVVLIDGFSFVIADLPGLIPNAHLGQGLGIQFLKHIERCRVLVHLISMQSLDPYKDYVALNKELQQYNSTLVEKKQIIVANKMDLPDAEKKLKDLQKKLSDVTIIPLSLINFYNIEKLKYAIKNLLQKTPFVIPKHDNFKVYDLNSETQTFTINKNKEGVFVVSGRQVEIFSHRTDFNNEAAVKRFNYLLKKIGIEEALKQKGAKLGDQVKICNYLFDFVI.

Positions 4–161 (LHFIDEAFNE…FKIKIQLKVL (158 aa)) constitute an Obg domain. The OBG-type G domain maps to 162–327 (ADVGLLGFPS…LKYAIKNLLQ (166 aa)). Residues 168–175 (GFPSVGKS), 193–197 (FTTLF), 214–217 (DLPG), 281–284 (NKMD), and 308–310 (SLI) contribute to the GTP site. 2 residues coordinate Mg(2+): Ser-175 and Thr-195. The OCT domain maps to 343–421 (DLNSETQTFT…ICNYLFDFVI (79 aa)).

Belongs to the TRAFAC class OBG-HflX-like GTPase superfamily. OBG GTPase family. Monomer. Mg(2+) is required as a cofactor.

It is found in the cytoplasm. An essential GTPase which binds GTP, GDP and possibly (p)ppGpp with moderate affinity, with high nucleotide exchange rates and a fairly low GTP hydrolysis rate. Plays a role in control of the cell cycle, stress response, ribosome biogenesis and in those bacteria that undergo differentiation, in morphogenesis control. The protein is GTPase Obg of Phytoplasma australiense.